The primary structure comprises 400 residues: 2-octaprenylphenol hydroxylase (400 aa).

FAD-binding positions include 49 to 52 and 297 to 303; these read RVSA and LAGQGVN.

Belongs to the UbiH/COQ6 family. As to quaternary structure, homotetramer. Component of the Ubi complex metabolon, which regroups five ubiquinone biosynthesis proteins (UbiE, UbiF, UbiG, UbiH and UbiI) and two accessory factors (UbiK and the lipid-binding protein UbiJ). FAD serves as cofactor.

It localises to the cytoplasm. It catalyses the reaction 2-all-trans-octaprenylphenol + NADPH + O2 + H(+) = 3-(all-trans-octaprenyl)benzene-1,2-diol + NADP(+) + H2O. The enzyme catalyses a 2-(all-trans-polyprenyl)phenol + NADPH + O2 + H(+) = a 3-(all-trans-polyprenyl)benzene-1,2-diol + NADP(+) + H2O. It participates in cofactor biosynthesis; ubiquinone biosynthesis. Functionally, FAD-dependent monooxygenase required for the aerobic hydroxylation of 2-octaprenylphenol to 2-octaprenyl-6-hydroxy-phenol, the first hydroxylation step in coenzyme Q (ubiquinone) biosynthesis. The polypeptide is 2-octaprenylphenol hydroxylase (Escherichia coli (strain K12)).